Consider the following 375-residue polypeptide: Membrane progesterone receptor epsilon (375 aa).

The tract at residues 1 to 39 (MPRRLQQRGAGVKGPPASTSRRSHPASASAPRSPPAATT) is disordered. Residues 1–84 (MPRRLQQRGA…VLKPTNETLN (84 aa)) are Cytoplasmic-facing. A compositionally biased stretch (low complexity) spans 15 to 39 (PPASTSRRSHPASASAPRSPPAATT). A helical membrane pass occupies residues 85–105 (FWTHFIPLLLFLSKFCRLFFL). Residues 106 to 114 (GGSDVPFHH) are Extracellular-facing. The helical transmembrane segment at 115 to 135 (PWLLPLWCYASGVLLTFAMSC) threads the bilayer. At 136–160 (TAHVFSCLSLRLRAAFFYLDYASIS) the chain is on the cytoplasmic side. Residues 161 to 181 (YYGFGSTVAYYYYLLPSLSLL) form a helical membrane-spanning segment. At 182 to 203 (DARVMTPYVQQRLGWHVDCTRL) the chain is on the extracellular side. The helical transmembrane segment at 204 to 224 (IAVYRALVLPVAFVLAVACTV) threads the bilayer. The Cytoplasmic segment spans residues 225 to 241 (ACCKSRTDWCSYPFALR). The chain crosses the membrane as a helical span at residues 242–262 (TFVFVMPLSMACPIMLESWLF). Residues 263–299 (DLRGENPTLFVHFYRRYFWLVVAAFFNVSKIPERIQP) are Extracellular-facing. A helical transmembrane segment spans residues 300 to 320 (GLFDIIGHSHQLFHIFTFLSI). Over 321–341 (YDQVYYVEEGLRQFLQAPPAA) the chain is Cytoplasmic. Residues 342-362 (PTFSGTVGYMLLLVVCLGLVI) form a helical membrane-spanning segment. At 363 to 375 (RKFLNSTEFCSKK) the chain is on the extracellular side.

Belongs to the ADIPOR family. As to quaternary structure, homodimer.

The protein resides in the cell membrane. Its function is as follows. Plasma membrane progesterone (P4) receptor coupled to G proteins. Seems to act through a G(s) mediated pathway. May be involved in regulating rapid P4 signaling in the nervous system. Also binds dehydroepiandrosterone (DHEA), pregnanolone, pregnenolone and allopregnanolone. The polypeptide is Membrane progesterone receptor epsilon (Mus musculus (Mouse)).